The sequence spans 634 residues: MKCAHFIDGPHCVKACPAGVLGENDTLVWKYADANAVCQLCHPNCTRGCKGPGLEGCPNGSKTPSIAAGVVGGLLCLVVVGLGIGLYLRRRHIVRKRTLRRLLQERELVEPLTPSGEAPNQAHLRILKETEFKKVKVLGSGAFGTVYKGLWIPEGEKVKIPVAIKELREATSPKANKEILDEAYVMASVDNPHVCRLLGICLTSTVQLITQLMPYGCLLDYIREHKDNIGSQYLLNWCVQIAKGMNYLEERRLVHRDLAARNVLVKTPQHVKITDFGLAKLLGADEKEYHAEGGKVPIKWMALESILHRIYTHQSDVWSYGVTVWELMTFGSKPYDGIPASEISSVLEKGERLPQPPICTIDVYMIMVKCWMIDADSRPKFRELIAEFSKMARDPPRYLVIQGDERMHLPSPTDSKFYRTLMEEEDMEDIVDADEYLVPHQGFFNSPSTSRTPLLSSLSATSNNSATNCIDRNGQGHPVREDSFVQRYSSDPTGNFLEESIDDGFLPAPEYVNQLMPKKPSTAMVQNQIYNNISLTAISKLPMDSRYQNSHSTAVDNPEYLNTNQSPLAKTVFESSPYWIQSGNHQINLDNPDYQQDFLPNETKPNGLLKVPAAENPEYLRVAAPKSEYIEASA.

The region spanning 132–399 is the Protein kinase domain; that stretch reads FKKVKVLGSG…KMARDPPRYL (268 aa). ATP is bound by residues 138–146 and Lys165; that span reads LGSGAFGTV. Residue Asp257 is the Proton acceptor of the active site.

The protein belongs to the protein kinase superfamily. Tyr protein kinase family. EGF receptor subfamily.

The catalysed reaction is L-tyrosyl-[protein] + ATP = O-phospho-L-tyrosyl-[protein] + ADP + H(+). In Avian leukosis virus (ALV), this protein is Tyrosine-protein kinase transforming protein erbB (V-ERBB).